Reading from the N-terminus, the 112-residue chain is DNA-binding protein TK1278 (112 aa).

This sequence belongs to the PDCD5 family.

This Thermococcus kodakarensis (strain ATCC BAA-918 / JCM 12380 / KOD1) (Pyrococcus kodakaraensis (strain KOD1)) protein is DNA-binding protein TK1278.